A 229-amino-acid polypeptide reads, in one-letter code: Cytidylate kinase (229 aa).

Residue 12-20 (GPSGAGKGT) participates in ATP binding.

It belongs to the cytidylate kinase family. Type 1 subfamily.

The protein localises to the cytoplasm. It catalyses the reaction CMP + ATP = CDP + ADP. It carries out the reaction dCMP + ATP = dCDP + ADP. In Pseudomonas paraeruginosa (strain DSM 24068 / PA7) (Pseudomonas aeruginosa (strain PA7)), this protein is Cytidylate kinase.